A 950-amino-acid chain; its full sequence is Sodium/calcium exchanger Calx (950 aa).

An N-terminal signal peptide occupies residues 1-22; it reads MQLLLKSIFTCALFVIFVYATA. The Extracellular segment spans residues 23–120; that stretch reads QSLLKVQETE…PQRNISVGDR (98 aa). 3 N-linked (GlcNAc...) asparagine glycosylation sites follow: asparagine 39, asparagine 47, and asparagine 114. Residues 121-141 form a helical membrane-spanning segment; sequence LVRGFVYFVLLIYLFVGVSII. The Cytoplasmic segment spans residues 142–179; the sequence is ADRFMAAIEAITSIERAVVVKGPNNTKQVMHVRIWNET. The helical transmembrane segment at 180 to 200 threads the bilayer; it reads VANLTLMALGSSAPEILLSVI. The Extracellular segment spans residues 201 to 216; the sequence is EIYAKDFESGDLGPGT. The chain crosses the membrane as a helical span at residues 217–237; that stretch reads IVGSAAYNLFMIIAVCMIWIP. At 238–257 the chain is on the cytoplasmic side; it reads AGEVRRIRHLRVFFVTALFS. 2 helical membrane-spanning segments follow: residues 258–278 and 279–299; these read VFAY…VILV and WEAI…YIAE. Topologically, residues 300-749 are cytoplasmic; sequence RRLLVYKYMD…NDDEEEEVPS (450 aa). Positions 301 to 318 are corresponds to the exchanger inhibitory peptide (XIP) found in other sodium/calcium exchange proteins and thought to be involved in calmodulin binding; that stretch reads RLLVYKYMDKNYRVNKRG. Residues 440-551 enclose the Calx-beta 1 domain; that stretch reads DPIRMYFEPG…MIATVMILDD (112 aa). Residues glutamate 455, aspartate 490, aspartate 515, aspartate 516, valine 518, glutamate 520, glutamate 523, aspartate 550, aspartate 551, and aspartate 552 each coordinate Ca(2+). The Calx-beta 2 domain maps to 555 to 694; that stretch reads GIFAFTDSVF…LTTAYVRIRE (140 aa). A helical transmembrane segment spans residues 750-770; that stretch reads CFSYVSHFVCLFWKVLFAFVP. Residues 771 to 775 lie on the Extracellular side of the membrane; the sequence is PTDIC. Residues 776–796 form a helical membrane-spanning segment; the sequence is GGYVTFVVSIFVIGVITAIIG. Residues 797 to 813 are Cytoplasmic-facing; sequence DAASYFGCALNIKDSVT. The chain crosses the membrane as a helical span at residues 814–834; it reads AILFVALGTSIPDTFASMIAA. Over 835–848 the chain is Extracellular; it reads KHDEGADNCIGNVT. Asparagine 846 carries an N-linked (GlcNAc...) asparagine glycan. The helical transmembrane segment at 849–869 threads the bilayer; the sequence is GSNAVNVFLGIGLAWTIAAVY. The Cytoplasmic segment spans residues 870–883; the sequence is HSSHGMTFNVEPGT. A helical transmembrane segment spans residues 884 to 904; sequence IGFAVALFCGEALIAIMLIMF. The Extracellular segment spans residues 905 to 923; that stretch reads RRWHKGIGAELGGPKVSKY. A helical transmembrane segment spans residues 924–944; sequence ISAAILVFLWVFYVVICILEA. Over 945–950 the chain is Cytoplasmic; the sequence is YDVIRV.

Belongs to the Ca(2+):cation antiporter (CaCA) (TC 2.A.19) family. SLC8 subfamily. As to expression, ubiquitously expressed with higher expression in head compared to body (at protein level). Enriched in photoreceptor cells of the eye (at protein level). In the adult head, expressed in retina, optic ganglia and all neuronal tissues.

It localises to the cell membrane. Its subcellular location is the cell projection. It is found in the rhabdomere membrane. It catalyses the reaction Ca(2+)(in) + 3 Na(+)(out) = Ca(2+)(out) + 3 Na(+)(in). Activated by a Na(+) electrochemical gradient but also undergoes Na(2+)-dependent inactivation. Inhibited by micromolar levels of cytoplasmic Ca(2+), which is the opposite of most characterized mammalian homologs. Its activity is regulated as follows. Exhibits greater extent of inhibition by Ca(2+) than isoform D/1.2. With respect to regulation, exhibits greater Na(2+)-dependent inactivation than isoform A/1.1, probably due to greater stability of the inactive Na(2+)-bound form. In terms of biological role, na(+)/Ca(2+) antiporter that couples the energy of a Na(+) electrochemical gradient to the movement of Ca(2+) against an electrochemical gradient across a membrane, which contributes to the regulation of cytoplasmic Ca(2+) levels. Mediates Na(+)/Ca(2+) exchange in photoreceptor cells and involved in controlling Ca(2+) levels during phototransduction, affecting magnitude of the photoresponse, activation kinetics, signal amplification, response termination, and light adaptation. Light induced depolarization of photoreceptor cells, resulting in Na(+) and Ca(2+) entry through trp/transient receptor potential protein channels, is essential for photoreceptor cell function but may result in toxic levels of cytoplasmic Ca(2+). Na(+)/Ca(2+) antiporter regulation of Ca(2+) levels protects photoreceptor cells from light-dependent retinal degeneration. The chain is Sodium/calcium exchanger Calx from Drosophila melanogaster (Fruit fly).